The primary structure comprises 93 residues: Small ribosomal subunit protein uS19 (93 aa).

It belongs to the universal ribosomal protein uS19 family.

Protein S19 forms a complex with S13 that binds strongly to the 16S ribosomal RNA. The polypeptide is Small ribosomal subunit protein uS19 (Anaplasma marginale (strain Florida)).